Reading from the N-terminus, the 374-residue chain is MSQRDYYEVLGVARDASEDEIKRQYRKLALQYHPDRNPDNPEAEQMFKEAAEAYDVLRDADKRARYDRFGHAGLNGNGGGHGFANADDVFAHFSDIFGDLFGFATGSSRMRGPRPQAGADLRYNLSISFRQAAKGDEVTLRLPKKVTCDECNGSGAAAGTKPETCRHCGGNGQIRQSQGFFQIAVPCPVCRGEGQVIPTPCPKCKGSGILQQVRELAVRIPAGVDTGNRLRLRGEGEPGLHGGPPGDLYVVVSVEQDKTFRRQGQDLVITHEVSFVQAALGDRIEVPTLDDPVTLDIPKGTQSGEVFRLTDQGLPYLGHHQKGDLLVEVRVLTPVSLTKKQEELLREFAKLEEGKPFEKVKKVARKIGKAMGME.

A J domain is found at 5–70 (DYYEVLGVAR…DKRARYDRFG (66 aa)). The segment at 135–213 (GDEVTLRLPK…CKGSGILQQV (79 aa)) adopts a CR-type zinc-finger fold. Zn(2+)-binding residues include Cys148, Cys151, Cys165, Cys168, Cys187, Cys190, Cys201, and Cys204. CXXCXGXG motif repeat units lie at residues 148–155 (CDECNGSG), 165–172 (CRHCGGNG), 187–194 (CPVCRGEG), and 201–208 (CPKCKGSG).

This sequence belongs to the DnaJ family. As to quaternary structure, homodimer. Zn(2+) is required as a cofactor.

The protein localises to the cytoplasm. Participates actively in the response to hyperosmotic and heat shock by preventing the aggregation of stress-denatured proteins and by disaggregating proteins, also in an autonomous, DnaK-independent fashion. Unfolded proteins bind initially to DnaJ; upon interaction with the DnaJ-bound protein, DnaK hydrolyzes its bound ATP, resulting in the formation of a stable complex. GrpE releases ADP from DnaK; ATP binding to DnaK triggers the release of the substrate protein, thus completing the reaction cycle. Several rounds of ATP-dependent interactions between DnaJ, DnaK and GrpE are required for fully efficient folding. Also involved, together with DnaK and GrpE, in the DNA replication of plasmids through activation of initiation proteins. This Nitratidesulfovibrio vulgaris (strain DSM 19637 / Miyazaki F) (Desulfovibrio vulgaris) protein is Chaperone protein DnaJ.